The chain runs to 81 residues: Small ribosomal subunit protein uS15 (81 aa).

It belongs to the universal ribosomal protein uS15 family. As to quaternary structure, part of the 30S ribosomal subunit. Forms a bridge to the 50S subunit in the 70S ribosome, contacting the 23S rRNA.

In terms of biological role, one of the primary rRNA binding proteins, it binds directly to 16S rRNA where it helps nucleate assembly of the platform of the 30S subunit by binding and bridging several RNA helices of the 16S rRNA. Its function is as follows. Forms an intersubunit bridge (bridge B4) with the 23S rRNA of the 50S subunit in the ribosome. This is Small ribosomal subunit protein uS15 from Mesomycoplasma hyorhinis (Mycoplasma hyorhinis).